A 78-amino-acid polypeptide reads, in one-letter code: Beta-defensin 29 (78 aa).

Positions Met1–Gly23 are cleaved as a signal peptide. 3 cysteine pairs are disulfide-bonded: Cys40–Cys67, Cys47–Cys61, and Cys51–Cys68.

The protein belongs to the beta-defensin family.

The protein localises to the secreted. In terms of biological role, has antibacterial activity. This Rattus norvegicus (Rat) protein is Beta-defensin 29 (Defb29).